Reading from the N-terminus, the 362-residue chain is Isopentenyl-diphosphate delta-isomerase (362 aa).

6–7 (RK) contributes to the substrate binding site. FMN-binding positions include 65–67 (SIT), serine 95, and asparagine 124. Residue 95–97 (SQR) coordinates substrate. Glutamine 158 is a binding site for substrate. Glutamate 159 lines the Mg(2+) pocket. FMN is bound by residues lysine 189, threonine 219, 269–271 (GVR), and 290–291 (AL).

This sequence belongs to the IPP isomerase type 2 family. In terms of assembly, homooctamer. Dimer of tetramers. FMN serves as cofactor. It depends on NADPH as a cofactor. Requires Mg(2+) as cofactor.

The protein localises to the cytoplasm. It carries out the reaction isopentenyl diphosphate = dimethylallyl diphosphate. Involved in the biosynthesis of isoprenoids. Catalyzes the 1,3-allylic rearrangement of the homoallylic substrate isopentenyl (IPP) to its allylic isomer, dimethylallyl diphosphate (DMAPP). The sequence is that of Isopentenyl-diphosphate delta-isomerase from Methanococcoides burtonii (strain DSM 6242 / NBRC 107633 / OCM 468 / ACE-M).